The following is a 115-amino-acid chain: Large ribosomal subunit protein bL20c (115 aa).

It belongs to the bacterial ribosomal protein bL20 family.

The protein resides in the plastid. It localises to the chloroplast. Binds directly to 23S ribosomal RNA and is necessary for the in vitro assembly process of the 50S ribosomal subunit. It is not involved in the protein synthesizing functions of that subunit. In Chaetosphaeridium globosum (Charophycean green alga), this protein is Large ribosomal subunit protein bL20c.